Consider the following 120-residue polypeptide: Large ribosomal subunit protein uL18 (120 aa).

This sequence belongs to the universal ribosomal protein uL18 family. As to quaternary structure, part of the 50S ribosomal subunit; part of the 5S rRNA/L5/L18/L25 subcomplex. Contacts the 5S and 23S rRNAs.

Its function is as follows. This is one of the proteins that bind and probably mediate the attachment of the 5S RNA into the large ribosomal subunit, where it forms part of the central protuberance. The chain is Large ribosomal subunit protein uL18 from Sinorhizobium medicae (strain WSM419) (Ensifer medicae).